The primary structure comprises 443 residues: D-aminoacyl-tRNA deacylase (443 aa).

It belongs to the DtdA deacylase family. As to quaternary structure, monomer. Zn(2+) is required as a cofactor.

It catalyses the reaction a D-aminoacyl-tRNA + H2O = a tRNA + a D-alpha-amino acid + H(+). The catalysed reaction is glycyl-tRNA(Ala) + H2O = tRNA(Ala) + glycine + H(+). Its function is as follows. D-aminoacyl-tRNA deacylase with broad substrate specificity. By recycling D-aminoacyl-tRNA to D-amino acids and free tRNA molecules, this enzyme counteracts the toxicity associated with the formation of D-aminoacyl-tRNA entities in vivo. This is D-aminoacyl-tRNA deacylase from Methanocorpusculum labreanum (strain ATCC 43576 / DSM 4855 / Z).